The chain runs to 27 residues: AGETHTVMINHAGRGAPKLVVGGKKLS.

In terms of biological role, has antifungal activity against B.cinera, F.oxysporum and P.piricola with IC(50) values of 15.2 uM, 12.4 uM and 18.1 uM, respectively. Lacks hemagglutinating activity towards rabbit erythrocytes. Lacks deoxyribonuclease, ribonuclease and protease inhibitory activities. The polypeptide is Ganodermin (Ganoderma lucidum (Ling zhi medicinal fungus)).